A 182-amino-acid chain; its full sequence is Fatty-acid and retinol-binding protein 2 (182 aa).

Residues 1–17 (MIRAFLVVALASVAVFS) form the signal peptide. Coiled-coil stretches lie at residues 46-73 (LKAI…EEEF) and 131-152 (TLDS…LSDD).

This sequence belongs to the fatty-acid and retinol-binding protein (FARBP) family.

The protein resides in the secreted. In terms of biological role, probably binds lipids. The protein is Fatty-acid and retinol-binding protein 2 (far-2) of Caenorhabditis elegans.